A 355-amino-acid polypeptide reads, in one-letter code: Phosphoserine aminotransferase (355 aa).

Arginine 41 is an L-glutamate binding site. Pyridoxal 5'-phosphate-binding positions include 75–76, tryptophan 99, threonine 147, aspartate 166, and glutamine 189; that span reads AS. N6-(pyridoxal phosphate)lysine is present on lysine 190. 231 to 232 is a binding site for pyridoxal 5'-phosphate; it reads NT.

This sequence belongs to the class-V pyridoxal-phosphate-dependent aminotransferase family. SerC subfamily. Homodimer. Pyridoxal 5'-phosphate is required as a cofactor.

Its subcellular location is the cytoplasm. It catalyses the reaction O-phospho-L-serine + 2-oxoglutarate = 3-phosphooxypyruvate + L-glutamate. It carries out the reaction 4-(phosphooxy)-L-threonine + 2-oxoglutarate = (R)-3-hydroxy-2-oxo-4-phosphooxybutanoate + L-glutamate. It functions in the pathway amino-acid biosynthesis; L-serine biosynthesis; L-serine from 3-phospho-D-glycerate: step 2/3. It participates in cofactor biosynthesis; pyridoxine 5'-phosphate biosynthesis; pyridoxine 5'-phosphate from D-erythrose 4-phosphate: step 3/5. Its function is as follows. Catalyzes the reversible conversion of 3-phosphohydroxypyruvate to phosphoserine and of 3-hydroxy-2-oxo-4-phosphonooxybutanoate to phosphohydroxythreonine. The sequence is that of Phosphoserine aminotransferase from Parabacteroides distasonis (strain ATCC 8503 / DSM 20701 / CIP 104284 / JCM 5825 / NCTC 11152).